The chain runs to 250 residues: ATP synthase subunit a (250 aa).

6 helical membrane-spanning segments follow: residues 31-51 (SAYMFLSVGVISLLMIGGMAG), 85-105 (FFPLVFSLFMFIAVSNLIGII), 115-135 (LIVTVALALLVFVIVLFYGLY), 144-164 (LFVPSGVPVYILPLVVFIEVI), 194-214 (FVGMLGALGFLGWMGAILPLG), and 217-237 (VAVTALEILVAFLQAYVFTIL).

This sequence belongs to the ATPase A chain family. In terms of assembly, F-type ATPases have 2 components, CF(1) - the catalytic core - and CF(0) - the membrane proton channel. CF(1) has five subunits: alpha(3), beta(3), gamma(1), delta(1), epsilon(1). CF(0) has four main subunits: a, b, b' and c.

It is found in the cell inner membrane. Functionally, key component of the proton channel; it plays a direct role in the translocation of protons across the membrane. The sequence is that of ATP synthase subunit a from Rhodopseudomonas palustris (strain BisB5).